The following is a 69-amino-acid chain: Cytochrome c oxidase subunit 8A, mitochondrial (69 aa).

The transit peptide at 1–25 directs the protein to the mitochondrion; sequence MSVLTPLLLRGLTGSARRLPVPRAK. An SIFI-degron motif is present at residues 2 to 19; that stretch reads SVLTPLLLRGLTGSARRL. Over 26–36 the chain is Mitochondrial matrix; that stretch reads IHSLPPEEKLG. The chain crosses the membrane as a helical span at residues 37 to 60; sequence IMELAVGLTSCFVTFLLPAGWILS. The Mitochondrial intermembrane portion of the chain corresponds to 61–69; that stretch reads HLETYRRPE.

It belongs to the cytochrome c oxidase VIII family. As to quaternary structure, component of the cytochrome c oxidase (complex IV, CIV), a multisubunit enzyme composed of 14 subunits. The complex is composed of a catalytic core of 3 subunits MT-CO1, MT-CO2 and MT-CO3, encoded in the mitochondrial DNA, and 11 supernumerary subunits COX4I, COX5A, COX5B, COX6A, COX6B, COX6C, COX7A, COX7B, COX7C, COX8 and NDUFA4, which are encoded in the nuclear genome. The complex exists as a monomer or a dimer and forms supercomplexes (SCs) in the inner mitochondrial membrane with NADH-ubiquinone oxidoreductase (complex I, CI) and ubiquinol-cytochrome c oxidoreductase (cytochrome b-c1 complex, complex III, CIII), resulting in different assemblies (supercomplex SCI(1)III(2)IV(1) and megacomplex MCI(2)III(2)IV(2)). In terms of processing, in response to mitochondrial stress, the precursor protein is ubiquitinated by the SIFI complex in the cytoplasm before mitochondrial import, leading to its degradation. Within the SIFI complex, UBR4 initiates ubiquitin chain that are further elongated or branched by KCMF1.

The protein resides in the mitochondrion inner membrane. The protein operates within energy metabolism; oxidative phosphorylation. Component of the cytochrome c oxidase, the last enzyme in the mitochondrial electron transport chain which drives oxidative phosphorylation. The respiratory chain contains 3 multisubunit complexes succinate dehydrogenase (complex II, CII), ubiquinol-cytochrome c oxidoreductase (cytochrome b-c1 complex, complex III, CIII) and cytochrome c oxidase (complex IV, CIV), that cooperate to transfer electrons derived from NADH and succinate to molecular oxygen, creating an electrochemical gradient over the inner membrane that drives transmembrane transport and the ATP synthase. Cytochrome c oxidase is the component of the respiratory chain that catalyzes the reduction of oxygen to water. Electrons originating from reduced cytochrome c in the intermembrane space (IMS) are transferred via the dinuclear copper A center (CU(A)) of subunit 2 and heme A of subunit 1 to the active site in subunit 1, a binuclear center (BNC) formed by heme A3 and copper B (CU(B)). The BNC reduces molecular oxygen to 2 water molecules using 4 electrons from cytochrome c in the IMS and 4 protons from the mitochondrial matrix. The protein is Cytochrome c oxidase subunit 8A, mitochondrial (COX8A) of Hylobates agilis (Agile gibbon).